The sequence spans 360 residues: uncharacterized protein (360 aa).

The next 6 helical transmembrane spans lie at 12–32 (ILPL…ITQI), 52–72 (VVLV…VIAV), 96–116 (IQLA…AYYI), 278–298 (IIWP…FLRY), 306–326 (FMPV…HFIL), and 336–356 (FIFA…YLLV).

The protein resides in the cell membrane. This is an uncharacterized protein from Rickettsia prowazekii (strain Madrid E).